Here is a 501-residue protein sequence, read N- to C-terminus: Nuclear receptor subfamily 5 group A member 2 (501 aa).

The segment at residues 43 to 114 (EELCPVCGDK…KCLSVGMKLE (72 aa)) is a DNA-binding region (nuclear receptor). Zn(2+)-binding residues include C46, C49, C63, C66, C82, C88, C98, and C101. 2 NR C4-type zinc fingers span residues 46-66 (CPVC…CESC) and 82-106 (CIEN…FQKC). The segment at 112-127 (KLEAVRADRMRGGRNK) is C-terminal extension (CTE). The FTZ-F1 box motif lies at 128–147 (FGPMYKRDRALKQQKKALIR). A disordered region spans residues 186 to 207 (NHTALPPTDYDRSPFVTSPISM). Residues 260–499 (SIPHLILELQ…NLLIEMLHAK (240 aa)) form the NR LBD domain. A phospholipid derivative-binding positions include 381–384 (GATL), Y476, and K480. Residues 488-499 (CNNLLIEMLHAK) are AF-2.

It belongs to the nuclear hormone receptor family. NR5 subfamily. Monomer; Binds DNA as a monomer. In terms of tissue distribution, detected in liver and adrenal gland.

Its subcellular location is the nucleus. The protein resides in the chromosome. Orphan nuclear receptor that binds DNA as a monomer to the 5'-TCAAGGCCA-3' sequence and controls expression of target genes: regulates key biological processes, such as cholesterol and bile acid synthesis pathways, as well as cartilage, liver and pancreas morphogenesis. Ligand-binding causes conformational change which causes recruitment of coactivators, promoting target gene activation. The specific ligand is unknown, but specific phospholipids, such as phosphatidylethanolamine, phosphatidylserine, dilauroyl phosphatidylcholine and diundecanoyl phosphatidylcholine can act as ligand in vitro. Acts as a pioneer transcription factor, which unwraps target DNA from histones and elicits local opening of closed chromatin. Involved in the formation of connective tissue in lower jaw. The chain is Nuclear receptor subfamily 5 group A member 2 from Gallus gallus (Chicken).